The chain runs to 286 residues: Structural protein p32K (286 aa).

Positions 1–12 (MYVTNNTALAGG) are cleaved as a propeptide — removed in mature form. The disordered stretch occupies residues 1–41 (MYVTNNTALAGGAYRKRKKKFQRPKPRKRARKSKKPPKSEN). Residues 14-36 (YRKRKKKFQRPKPRKRARKSKKP) are compositionally biased toward basic residues.

Belongs to the atadenoviridae p32K protein family.

It localises to the virion. This Ovine adenovirus D serotype 7 (isolate OAV287) (OAdV-7) protein is Structural protein p32K.